Consider the following 424-residue polypeptide: MPSHPHLWFPFTSVKDAPDPLKVVSGKGARLTLADGRELIDCISSWWVNLHGHAHLRIVEAIAQQAATLEHVIFAGFSHEPAERLAMELCKILPEKLTRVFFSDNGSTAVEVALKMALQYWHNLDQPRSRILAFDGAYHGDTFGAMSVGERSLFNAPFEKLLFSVEFLPYPETWWGDETVEAKEAAAIAAVEQALAAGDVAAVIIEPLVQGAGGMRMARPQFLQQLAARVQAAGSLLIADEVMTGFGRTGAWFACQRAGIQPDLICLSKGLTGGFLPLSITVATEVIYDTFCSGNPDHTFYHGHSYTANPLGCAAAIASLELLLDSEAIVQGLEDAHLPGLELLAQHPKVTRPRLTGGIAACDLVSDRGGYLDPIGLRVRQAAIARGLLLRPLGNVLYLLPPYCLTPTELQDIYAAIADLLDEI.

Substrate is bound at residue Trp46. A pyridoxal 5'-phosphate-binding site is contributed by 106-107 (GS). Residue Tyr138 coordinates substrate. Residue Asp240 coordinates pyridoxal 5'-phosphate. Positions 269 and 303 each coordinate substrate. Lys269 carries the N6-(pyridoxal phosphate)lysine modification. A pyridoxal 5'-phosphate-binding site is contributed by 304 to 305 (HS). Arg391 contributes to the substrate binding site.

This sequence belongs to the class-III pyridoxal-phosphate-dependent aminotransferase family. BioA subfamily. Homodimer. The cofactor is pyridoxal 5'-phosphate.

The protein localises to the cytoplasm. It carries out the reaction (8S)-8-amino-7-oxononanoate + S-adenosyl-L-methionine = S-adenosyl-4-methylsulfanyl-2-oxobutanoate + (7R,8S)-7,8-diammoniononanoate. Its pathway is cofactor biosynthesis; biotin biosynthesis; 7,8-diaminononanoate from 8-amino-7-oxononanoate (SAM route): step 1/1. Its function is as follows. Catalyzes the transfer of the alpha-amino group from S-adenosyl-L-methionine (SAM) to 7-keto-8-aminopelargonic acid (KAPA) to form 7,8-diaminopelargonic acid (DAPA). It is the only aminotransferase known to utilize SAM as an amino donor. Complements a bioU deletion in Synechocystis PCC 6803. In Synechococcus elongatus (strain ATCC 33912 / PCC 7942 / FACHB-805) (Anacystis nidulans R2), this protein is Adenosylmethionine-8-amino-7-oxononanoate aminotransferase.